A 301-amino-acid chain; its full sequence is Acetyl-coenzyme A carboxylase carboxyl transferase subunit beta (301 aa).

One can recognise a CoA carboxyltransferase N-terminal domain in the interval 25-294 (LWIKDPSTGE…NSDAPEHEKT (270 aa)). Positions 282–301 (QPGNSDAPEHEKTEATDKAA) are disordered. Residues 288–301 (APEHEKTEATDKAA) are compositionally biased toward basic and acidic residues.

Belongs to the AccD/PCCB family. As to quaternary structure, acetyl-CoA carboxylase is a heterohexamer composed of biotin carboxyl carrier protein (AccB), biotin carboxylase (AccC) and two subunits each of ACCase subunit alpha (AccA) and ACCase subunit beta (AccD).

The protein resides in the cytoplasm. The catalysed reaction is N(6)-carboxybiotinyl-L-lysyl-[protein] + acetyl-CoA = N(6)-biotinyl-L-lysyl-[protein] + malonyl-CoA. The protein operates within lipid metabolism; malonyl-CoA biosynthesis; malonyl-CoA from acetyl-CoA: step 1/1. In terms of biological role, component of the acetyl coenzyme A carboxylase (ACC) complex. Biotin carboxylase (BC) catalyzes the carboxylation of biotin on its carrier protein (BCCP) and then the CO(2) group is transferred by the transcarboxylase to acetyl-CoA to form malonyl-CoA. The sequence is that of Acetyl-coenzyme A carboxylase carboxyl transferase subunit beta from Brucella anthropi (strain ATCC 49188 / DSM 6882 / CCUG 24695 / JCM 21032 / LMG 3331 / NBRC 15819 / NCTC 12168 / Alc 37) (Ochrobactrum anthropi).